Reading from the N-terminus, the 421-residue chain is MVADVLLTHFNQLFCLNDPGHPLTGQEMKKATIVEDGYIAIKDGLIVALGSGEPDAELVGTQTIMRSYKGKIATPGIIDCHTHLVYGGSREHEFAKKLAGVSYLDILAQGGGILSTVRATRSASFDNLYQKSKRLLDYMLLHGVTTVEAKSGYGLDWETEKRQLDVVAALEKDHPIDLVSTFMAAHAIPEEYKGNPKAYLDVIIKDMLPVVKEENLAEFCDIFCEKNVFTADESRYLLSKAKEMGFKLRIHADEIASIGGVDVAAELSAVSAEHLMMITDDGIAKLIGAGVIGNLLPATTFSLMEDTYAPARKMIDAGMAITLSTDSNPGSCPTANMQFVMQLGCFMLRLTPIEVLNAVTINAAYSVNRQERVGSLTVGKEADIAIFDAPNIDYPFYFFATNLIHQVYKKGQLTVDRGRIL.

Fe(3+)-binding residues include H81 and H83. Zn(2+) is bound by residues H81 and H83. 4-imidazolone-5-propanoate-binding residues include R90, Y153, and H186. An N-formimidoyl-L-glutamate-binding site is contributed by Y153. H251 lines the Fe(3+) pocket. H251 provides a ligand contact to Zn(2+). Position 254 (E254) interacts with 4-imidazolone-5-propanoate. D326 contacts Fe(3+). Residue D326 coordinates Zn(2+). N-formimidoyl-L-glutamate-binding residues include N328 and G330. Position 331 (S331) interacts with 4-imidazolone-5-propanoate.

Belongs to the metallo-dependent hydrolases superfamily. HutI family. Zn(2+) serves as cofactor. The cofactor is Fe(3+).

Its subcellular location is the cytoplasm. It catalyses the reaction 4-imidazolone-5-propanoate + H2O = N-formimidoyl-L-glutamate. It participates in amino-acid degradation; L-histidine degradation into L-glutamate; N-formimidoyl-L-glutamate from L-histidine: step 3/3. In terms of biological role, catalyzes the hydrolytic cleavage of the carbon-nitrogen bond in imidazolone-5-propanoate to yield N-formimidoyl-L-glutamate. It is the third step in the universal histidine degradation pathway. This chain is Imidazolonepropionase, found in Streptococcus pyogenes serotype M1.